We begin with the raw amino-acid sequence, 274 residues long: 2,3,4,5-tetrahydropyridine-2,6-dicarboxylate N-succinyltransferase (274 aa).

Positions 104 and 141 each coordinate substrate.

The protein belongs to the transferase hexapeptide repeat family. As to quaternary structure, homotrimer.

The protein localises to the cytoplasm. The catalysed reaction is (S)-2,3,4,5-tetrahydrodipicolinate + succinyl-CoA + H2O = (S)-2-succinylamino-6-oxoheptanedioate + CoA. Its pathway is amino-acid biosynthesis; L-lysine biosynthesis via DAP pathway; LL-2,6-diaminopimelate from (S)-tetrahydrodipicolinate (succinylase route): step 1/3. This chain is 2,3,4,5-tetrahydropyridine-2,6-dicarboxylate N-succinyltransferase, found in Shewanella baltica (strain OS155 / ATCC BAA-1091).